We begin with the raw amino-acid sequence, 490 residues long: Pyridine nucleotide-disulfide oxidoreductase domain-containing protein 1 (490 aa).

It belongs to the class-I pyridine nucleotide-disulfide oxidoreductase family. PYROXD1 subfamily. FAD serves as cofactor.

The protein resides in the nucleus. It is found in the cytoplasm. It localises to the myofibril. Its subcellular location is the sarcomere. Probable FAD-dependent oxidoreductase; involved in the cellular oxidative stress response. Required for normal sarcomere structure and muscle fiber integrity. This is Pyridine nucleotide-disulfide oxidoreductase domain-containing protein 1 (pyroxd1) from Danio rerio (Zebrafish).